Reading from the N-terminus, the 288-residue chain is MASLRDIKSRITSTKKSSQITKAMQMVSAAKLNRAENNAKSFVPYMEKIQEVVAAIATGTSAKHPMLLSRPVKKTGYLVITSDRGLAGPFNSSILRAAYQTIQSRHQSADEYAVIVIGKIGRDFFKKRGIPVISEVTGLGDEVAFADIKELASSTVQMFSDEAFDELYMFYNHFVSAISQEVTEKKLLPLTDISAAATPNKRSASYEFEPSEEEILEVLLPQYAESLIFGALLDSKASEHAARMTAMKSATDNAKELIDSLTLSYNRARQAAITQEITEIVGGAAALE.

Belongs to the ATPase gamma chain family. F-type ATPases have 2 components, CF(1) - the catalytic core - and CF(0) - the membrane proton channel. CF(1) has five subunits: alpha(3), beta(3), gamma(1), delta(1), epsilon(1). CF(0) has three main subunits: a, b and c.

It is found in the cell membrane. Functionally, produces ATP from ADP in the presence of a proton gradient across the membrane. The gamma chain is believed to be important in regulating ATPase activity and the flow of protons through the CF(0) complex. This chain is ATP synthase gamma chain, found in Bacillus pumilus (strain SAFR-032).